The following is a 456-amino-acid chain: Phospholipase A1 member A (456 aa).

Positions 1 to 25 are cleaved as a signal peptide; it reads MPPGPWESCFWVGGLLLWLSVGSSG. Residue Ser166 is the Nucleophile of the active site. Asp190 acts as the Charge relay system in catalysis. Cys245 and Cys258 are oxidised to a cystine. His260 functions as the Charge relay system in the catalytic mechanism. 2 disulfides stabilise this stretch: Cys282-Cys293 and Cys296-Cys304. N-linked (GlcNAc...) asparagine glycosylation is present at Asn365.

The protein belongs to the AB hydrolase superfamily. Lipase family.

The protein resides in the secreted. It catalyses the reaction a 1,2-diacyl-sn-glycero-3-phospho-L-serine + H2O = a 2-acyl-sn-glycero-3-phospho-L-serine + a fatty acid + H(+). It carries out the reaction 1,2-di-(9Z)-octadecenoyl-sn-glycero-3-phospho-L-serine + H2O = 2-(9Z-octadecenoyl)-sn-glycero-3-phospho-L-serine + (9Z)-octadecenoate + H(+). The enzyme catalyses 1-hexadecanoyl-2-(5Z,8Z,11Z,14Z-eicosatetraenoyl)-sn-glycero-3-phospho-L-serine + H2O = 2-(5Z,8Z,11Z,14Z)-eicosatetraenoyl-sn-glycero-3-phospho-L-serine + hexadecanoate + H(+). The catalysed reaction is a 1-acyl-sn-glycero-3-phospho-L-serine + H2O = sn-glycero-3-phospho-L-serine + a fatty acid + H(+). It catalyses the reaction 1-(9Z-octadecenoyl)-sn-glycero-3-phospho-L-serine + H2O = sn-glycero-3-phospho-L-serine + (9Z)-octadecenoate + H(+). Its function is as follows. Hydrolyzes the ester bond of the acyl group attached at the sn-1 position of phosphatidylserines (phospholipase A1 activity) and 1-acyl-2-lysophosphatidylserines (lysophospholipase activity) in the pathway of phosphatidylserines acyl chain remodeling. Cleaves phosphatidylserines exposed on the outer leaflet of the plasma membrane of apoptotic cells producing 2-acyl-1-lysophosphatidylserines, which in turn enhance mast cell activation and histamine production. Has no activity toward other glycerophospholipids including phosphatidylcholines, phosphatidylethanolamines, phosphatidic acids or phosphatidylinositols, or glycerolipids such as triolein. This chain is Phospholipase A1 member A (PLA1A), found in Pongo abelii (Sumatran orangutan).